The primary structure comprises 113 residues: uncharacterized protein (113 aa).

Residues 78 to 113 (YCNRGSERTNQGNRGSAPSKILLPRTIADPFRGGPE) form a disordered region.

This is an uncharacterized protein from Halobacterium phage phiH (Bacteriophage phi-H).